A 237-amino-acid polypeptide reads, in one-letter code: tRNA1(Val) (adenine(37)-N6)-methyltransferase (237 aa).

The protein belongs to the methyltransferase superfamily. tRNA (adenine-N(6)-)-methyltransferase family.

The protein resides in the cytoplasm. The enzyme catalyses adenosine(37) in tRNA1(Val) + S-adenosyl-L-methionine = N(6)-methyladenosine(37) in tRNA1(Val) + S-adenosyl-L-homocysteine + H(+). Its function is as follows. Specifically methylates the adenine in position 37 of tRNA(1)(Val) (anticodon cmo5UAC). This is tRNA1(Val) (adenine(37)-N6)-methyltransferase from Bacteroides thetaiotaomicron (strain ATCC 29148 / DSM 2079 / JCM 5827 / CCUG 10774 / NCTC 10582 / VPI-5482 / E50).